The sequence spans 78 residues: MNITNQGYAFIGAGLAMIAILGVGIGQGWSAAKSVEAVARNPEVVSKIRSQYILSAAVTETGALYCFIIAILLVFVAR.

The next 2 membrane-spanning stretches (helical) occupy residues 9-29 and 56-76; these read AFIGAGLAMIAILGVGIGQGW and AAVTETGALYCFIIAILLVFV.

It belongs to the ATPase C chain family. In terms of assembly, F-type ATPases have 2 components, F(1) - the catalytic core - and F(0) - the membrane proton channel. F(1) has five subunits: alpha(3), beta(3), gamma(1), delta(1), epsilon(1). F(0) has three main subunits: a(1), b(2) and c(10-14). The alpha and beta chains form an alternating ring which encloses part of the gamma chain. F(1) is attached to F(0) by a central stalk formed by the gamma and epsilon chains, while a peripheral stalk is formed by the delta and b chains.

The protein localises to the cell membrane. Functionally, f(1)F(0) ATP synthase produces ATP from ADP in the presence of a proton or sodium gradient. F-type ATPases consist of two structural domains, F(1) containing the extramembraneous catalytic core and F(0) containing the membrane proton channel, linked together by a central stalk and a peripheral stalk. During catalysis, ATP synthesis in the catalytic domain of F(1) is coupled via a rotary mechanism of the central stalk subunits to proton translocation. Its function is as follows. Key component of the F(0) channel; it plays a direct role in translocation across the membrane. A homomeric c-ring of between 10-14 subunits forms the central stalk rotor element with the F(1) delta and epsilon subunits. The polypeptide is ATP synthase subunit c (Malacoplasma penetrans (strain HF-2) (Mycoplasma penetrans)).